Reading from the N-terminus, the 59-residue chain is Large ribosomal subunit protein uL30 (59 aa).

This sequence belongs to the universal ribosomal protein uL30 family. In terms of assembly, part of the 50S ribosomal subunit.

This Aliivibrio salmonicida (strain LFI1238) (Vibrio salmonicida (strain LFI1238)) protein is Large ribosomal subunit protein uL30.